Consider the following 331-residue polypeptide: MKQTVYTASPESQQIHVWSLEADGKLTLVQVVDAPGQVQPMVVSPNKEYLYVGVRPEFRVLAYRITPDNGALTFAGEAALPGSPTHISTDHHGRFVFSASYNQGCVSVTPLQDGLPGETVTVVEGLEGCHSANISPDNRTLWVPALKQDRICLFTLSEDGFLSAQEPAEVTTVDGAGPRHMVFHPNQQYGYCVNELNSSVDVWELKDPNGNIECVQTLDMMPQDFTGVRWAADIHITPDGRHLYACDRTASIITVFSVSEDGSVLAVEGYQPTETQPRGFNLDHSGKYLIAAGQKSHHIAVYEIEGEQGLLHEKGRYAVGQGPMWVVVNAH.

Belongs to the cycloisomerase 2 family.

The catalysed reaction is 6-phospho-D-glucono-1,5-lactone + H2O = 6-phospho-D-gluconate + H(+). The protein operates within carbohydrate degradation; pentose phosphate pathway; D-ribulose 5-phosphate from D-glucose 6-phosphate (oxidative stage): step 2/3. Catalyzes the hydrolysis of 6-phosphogluconolactone to 6-phosphogluconate. The chain is 6-phosphogluconolactonase from Klebsiella pneumoniae (strain 342).